A 270-amino-acid chain; its full sequence is Tetraspanin-17 (270 aa).

Residues 1-19 (MPGKHQHFQEPEVGCCGKY) are Cytoplasmic-facing. Residues 20–40 (FLFGFNIVFWVLGALFLAIGL) traverse the membrane as a helical segment. The Extracellular portion of the chain corresponds to 41–63 (WAWGEKGVLSNISALTDLGGLDP). N-linked (GlcNAc...) asparagine glycosylation is present at Asn51. The helical transmembrane segment at 64-84 (VWLFVVVGGVMSVLGFAGCIG) threads the bilayer. At 85–94 (ALRENTFLLK) the chain is on the cytoplasmic side. The chain crosses the membrane as a helical span at residues 95–115 (FFSVFLGLIFFLELATGILAF). Topologically, residues 116–234 (VFKDWIRDQL…GQFEKWLQDN (119 aa)) are extracellular. Cystine bridges form between Cys155/Cys223, Cys156/Cys188, Cys172/Cys182, and Cys189/Cys202. Asn171 is a glycosylation site (N-linked (GlcNAc...) asparagine). A helical membrane pass occupies residues 235-255 (LIVVAGVFMGIALLQIFGICL). Topologically, residues 256-270 (AQNLVSDIKAVKANW) are cytoplasmic.

Belongs to the tetraspanin (TM4SF) family. Interacts with ADAM10; the interaction influences ADAM10 substrate specificity, endocytosis and turnover.

It localises to the cell membrane. Part of TspanC8 subgroup, composed of 6 members that interact with the transmembrane metalloprotease ADAM10. This interaction is required for ADAM10 exit from the endoplasmic reticulum and for enzymatic maturation and trafficking to the cell surface as well as substrate specificity. Different TspanC8/ADAM10 complexes have distinct substrates. Seems to regulate VE-cadherin expression in endothelial cells probably through interaction with ADAM10, promoting leukocyte transmigration. In Homo sapiens (Human), this protein is Tetraspanin-17.